Here is a 215-residue protein sequence, read N- to C-terminus: Porin MspB (215 aa).

Positions 1–31 (MTAFKRVLIAMISALLAGTTGMFVSAGAAHA) are cleaved as a signal peptide.

Belongs to the mycobacterial porin (TC 1.B.24) family. In terms of assembly, octamers. Probably forms a goblet with the wide end on the exterior of the outer membrane and a central channel. It is not known if mixed oligomers of MspB with other Msp subunits form in vivo.

Its subcellular location is the cell outer membrane. It localises to the secreted. The protein localises to the cell wall. Functionally, a backup porin induced when MspA, the major porin, is deleted. Probably forms a water-filled channel which favors the permeation of cations. There are about 2400 porins in wild-type, 800 in an mspA deletion and 150 in a double mspA-mspC deletion. A triple mspA-mspC-mspD deletion mutant has low but detectable channel activity. Different conductance values with maxima at 2.3 and 4.6 nanosiemens might be caused by a simultaneous reconstitution of MspB channels into the membrane or by the existence of different MspB conformations. This is Porin MspB (mspB) from Mycolicibacterium smegmatis (strain ATCC 700084 / mc(2)155) (Mycobacterium smegmatis).